We begin with the raw amino-acid sequence, 115 residues long: Transcription and mRNA export factor ENY2 (115 aa).

This sequence belongs to the ENY2 family. In terms of assembly, component of a deubiquitination module (DUB module) formed by ENY2, SGF11, and UBP22 in Arabidopsis. Interacts directly with SGF11, but not with UBP22. Interacts with MOS4. Expressed in roots, cotyledons, leaves and upper part of sepals.

It is found in the nucleus. The protein resides in the nucleoplasm. Functionally, component of a deubiquitination module (DUB module) that specifically deubiquinates monoubiquinated histone H2B (H2Bub). Does not seem to be a component of the TREX-2 complex. Seems to act independently of the SAGA multiprotein complex. The DUB module is responsible for the major H2Bub deubiquitinase activity in Arabidopsis. The chain is Transcription and mRNA export factor ENY2 from Arabidopsis thaliana (Mouse-ear cress).